Reading from the N-terminus, the 486-residue chain is Na(+)/H(+) antiporter NhaA 2 (486 aa).

Transmembrane regions (helical) follow at residues 58-78 (GGLL…TAPG), 102-122 (LTDW…GLEL), 138-158 (ALPV…CLAL), 168-188 (AWAI…SLAG), 198-218 (VLLG…ALGL), 220-240 (HGIN…TALA), 260-280 (ISLH…GLLV), 300-320 (LGPI…TGVS), 338-358 (VAVG…WLAV), 374-394 (LVPL…ITRL), and 404-424 (GAST…LTAL). The segment at 432–486 (GAPATRGSSRPATQVGGVAGPIPQTRRESDGGPTGGQEPPPARVRRAPPASPHPR) is disordered.

It belongs to the NhaA Na(+)/H(+) (TC 2.A.33) antiporter family.

Its subcellular location is the cell membrane. It carries out the reaction Na(+)(in) + 2 H(+)(out) = Na(+)(out) + 2 H(+)(in). Na(+)/H(+) antiporter that extrudes sodium in exchange for external protons. This chain is Na(+)/H(+) antiporter NhaA 2, found in Frankia alni (strain DSM 45986 / CECT 9034 / ACN14a).